The primary structure comprises 515 residues: MVVAYKHEPFTDFSVEANKLAFEEGLKKVESYLGQDYPLIIGGEKITTEDKIVSVNPANKEELVGRVSKASRELAEKAMQVADETFQTWRKSKPEMRADILFRAAAIVRRRKHEFSAILVKEAGKPWNEADADTAEAIDFMEYYGRQMLKLKDGIPVESRPIEYNRFSYIPLGVGVIISPWNFPFAIMAGMTTAALVSGNTVLLKPASTTPVVAAKFMEVLEEAGLPAGVVNFVPGNGSEVGDYLVDHPRTRFISFTGSRDVGIRIYERAAKVNPGQIWLKRVIAEMGGKDTIVVDKEADLELAAKSIVASAFGFSGQKCSACSRAVIHEDVYDHVLNRAVELTKELTVANPAVLGTNMGPVNDQAAFDKVMSYVAIGKEEGRILAGGEGDDSKGWFIQPTIVADVAEDARLMKEEIFGPVVAFCKAKDFDHALAIANNTEYGLTGAVISNNRDHIEKAREDFHVGNLYFNRGCTGAIVGYQPFGGFNMSGTDSKAGGPDYLALHMQAKTTSETL.

Residues Glu286 and Cys320 contribute to the active site.

The protein belongs to the aldehyde dehydrogenase family. RocA subfamily.

It catalyses the reaction L-glutamate 5-semialdehyde + NAD(+) + H2O = L-glutamate + NADH + 2 H(+). Its pathway is amino-acid degradation; L-proline degradation into L-glutamate; L-glutamate from L-proline: step 2/2. This Bacillus anthracis (strain A0248) protein is 1-pyrroline-5-carboxylate dehydrogenase.